Reading from the N-terminus, the 226-residue chain is uncharacterized protein (226 aa).

This is an uncharacterized protein from Mycobacterium bovis (strain ATCC BAA-935 / AF2122/97).